Consider the following 280-residue polypeptide: Phosphatidylglycerol--prolipoprotein diacylglyceryl transferase (280 aa).

Helical transmembrane passes span 26-46 (LAIH…WFYA), 71-91 (FILW…ILFY), 106-126 (IWNG…AMIL), and 132-152 (GIPV…GLLF). Arg-154 is an a 1,2-diacyl-sn-glycero-3-phospho-(1'-sn-glycerol) binding site. A run of 3 helical transmembrane segments spans residues 193–213 (GLEG…FKAL), 217–237 (GTVT…VEFF), and 251–271 (WLTM…WAVL).

This sequence belongs to the Lgt family.

The protein localises to the cell inner membrane. The enzyme catalyses L-cysteinyl-[prolipoprotein] + a 1,2-diacyl-sn-glycero-3-phospho-(1'-sn-glycerol) = an S-1,2-diacyl-sn-glyceryl-L-cysteinyl-[prolipoprotein] + sn-glycerol 1-phosphate + H(+). It participates in protein modification; lipoprotein biosynthesis (diacylglyceryl transfer). Catalyzes the transfer of the diacylglyceryl group from phosphatidylglycerol to the sulfhydryl group of the N-terminal cysteine of a prolipoprotein, the first step in the formation of mature lipoproteins. The sequence is that of Phosphatidylglycerol--prolipoprotein diacylglyceryl transferase from Agrobacterium fabrum (strain C58 / ATCC 33970) (Agrobacterium tumefaciens (strain C58)).